The sequence spans 120 residues: Large ribosomal subunit protein bL20 (120 aa).

The protein belongs to the bacterial ribosomal protein bL20 family.

Functionally, binds directly to 23S ribosomal RNA and is necessary for the in vitro assembly process of the 50S ribosomal subunit. It is not involved in the protein synthesizing functions of that subunit. The sequence is that of Large ribosomal subunit protein bL20 from Baumannia cicadellinicola subsp. Homalodisca coagulata.